Here is a 306-residue protein sequence, read N- to C-terminus: D-alanine--D-alanine ligase (306 aa).

The region spanning 101–301 is the ATP-grasp domain; that stretch reads KKILAHAGLP…FPDLVEHLVR (201 aa). Residue 129–185 coordinates ATP; that stretch reads VAELGLPVVVKAPTQGSSIGVYIVEREEDLEARITDAVAYGGTRVLVEKFIAGPELT. 3 residues coordinate Mg(2+): Asp-256, Glu-268, and Asn-270.

It belongs to the D-alanine--D-alanine ligase family. Requires Mg(2+) as cofactor. It depends on Mn(2+) as a cofactor.

Its subcellular location is the cytoplasm. The catalysed reaction is 2 D-alanine + ATP = D-alanyl-D-alanine + ADP + phosphate + H(+). It functions in the pathway cell wall biogenesis; peptidoglycan biosynthesis. Its function is as follows. Cell wall formation. This chain is D-alanine--D-alanine ligase, found in Desulforudis audaxviator (strain MP104C).